A 150-amino-acid chain; its full sequence is UPF0178 protein BceJ2315_16760 (150 aa).

It belongs to the UPF0178 family.

The polypeptide is UPF0178 protein BceJ2315_16760 (Burkholderia cenocepacia (strain ATCC BAA-245 / DSM 16553 / LMG 16656 / NCTC 13227 / J2315 / CF5610) (Burkholderia cepacia (strain J2315))).